Here is a 386-residue protein sequence, read N- to C-terminus: Acetate kinase (386 aa).

Mg(2+) is bound at residue asparagine 7. Lysine 14 serves as a coordination point for ATP. Arginine 78 serves as a coordination point for substrate. The active-site Proton donor/acceptor is aspartate 135. ATP is bound by residues 195 to 199 (HLGNG), 268 to 270 (DMR), and 316 to 320 (GIGEN). Glutamate 370 lines the Mg(2+) pocket.

The protein belongs to the acetokinase family. Homodimer. It depends on Mg(2+) as a cofactor. The cofactor is Mn(2+).

It is found in the cytoplasm. It catalyses the reaction acetate + ATP = acetyl phosphate + ADP. The protein operates within metabolic intermediate biosynthesis; acetyl-CoA biosynthesis; acetyl-CoA from acetate: step 1/2. Its function is as follows. Catalyzes the formation of acetyl phosphate from acetate and ATP. Can also catalyze the reverse reaction. This Arthrobacter sp. (strain FB24) protein is Acetate kinase.